A 119-amino-acid polypeptide reads, in one-letter code: Large ribosomal subunit protein uL18 (119 aa).

Belongs to the universal ribosomal protein uL18 family. As to quaternary structure, part of the 50S ribosomal subunit; part of the 5S rRNA/L5/L18/L25 subcomplex. Contacts the 5S and 23S rRNAs.

This is one of the proteins that bind and probably mediate the attachment of the 5S RNA into the large ribosomal subunit, where it forms part of the central protuberance. This Ruegeria sp. (strain TM1040) (Silicibacter sp.) protein is Large ribosomal subunit protein uL18.